Consider the following 417-residue polypeptide: Serine--tRNA ligase (417 aa).

232 to 234 (TAE) contributes to the L-serine binding site. ATP is bound by residues 263-265 (RRE) and Val279. Residue Glu286 participates in L-serine binding. 350–353 (EISS) contacts ATP. L-serine is bound at residue Ser385.

It belongs to the class-II aminoacyl-tRNA synthetase family. Type-1 seryl-tRNA synthetase subfamily. As to quaternary structure, homodimer. The tRNA molecule binds across the dimer.

The protein localises to the cytoplasm. The enzyme catalyses tRNA(Ser) + L-serine + ATP = L-seryl-tRNA(Ser) + AMP + diphosphate + H(+). The catalysed reaction is tRNA(Sec) + L-serine + ATP = L-seryl-tRNA(Sec) + AMP + diphosphate + H(+). It functions in the pathway aminoacyl-tRNA biosynthesis; selenocysteinyl-tRNA(Sec) biosynthesis; L-seryl-tRNA(Sec) from L-serine and tRNA(Sec): step 1/1. Its function is as follows. Catalyzes the attachment of serine to tRNA(Ser). Is also able to aminoacylate tRNA(Sec) with serine, to form the misacylated tRNA L-seryl-tRNA(Sec), which will be further converted into selenocysteinyl-tRNA(Sec). This is Serine--tRNA ligase from Leptospira interrogans serogroup Icterohaemorrhagiae serovar copenhageni (strain Fiocruz L1-130).